The chain runs to 480 residues: Chromosomal replication initiator protein DnaA (480 aa).

The segment at Met1–Arg71 is domain I, interacts with DnaA modulators. The domain II stretch occupies residues Arg71–Ser142. Residues Arg143–Ala359 are domain III, AAA+ region. Positions 187, 189, 190, and 191 each coordinate ATP. The interval Arg360–Gly480 is domain IV, binds dsDNA.

The protein belongs to the DnaA family. As to quaternary structure, oligomerizes as a right-handed, spiral filament on DNA at oriC.

It localises to the cytoplasm. Plays an essential role in the initiation and regulation of chromosomal replication. ATP-DnaA binds to the origin of replication (oriC) to initiate formation of the DNA replication initiation complex once per cell cycle. Binds the DnaA box (a 9 base pair repeat at the origin) and separates the double-stranded (ds)DNA. Forms a right-handed helical filament on oriC DNA; dsDNA binds to the exterior of the filament while single-stranded (ss)DNA is stabiized in the filament's interior. The ATP-DnaA-oriC complex binds and stabilizes one strand of the AT-rich DNA unwinding element (DUE), permitting loading of DNA polymerase. After initiation quickly degrades to an ADP-DnaA complex that is not apt for DNA replication. Binds acidic phospholipids. In Bordetella bronchiseptica (strain ATCC BAA-588 / NCTC 13252 / RB50) (Alcaligenes bronchisepticus), this protein is Chromosomal replication initiator protein DnaA.